A 750-amino-acid chain; its full sequence is Sulfhydryl oxidase 1 (750 aa).

The N-terminal stretch at 1-32 (MGRCNRGSGPPSSLLLLLLLLLWLLAVPGASA) is a signal peptide. A Thioredoxin domain is found at 39 to 159 (YSPSDPLTLL…RERLIDALES (121 aa)). Active-site nucleophile residues include Cys-73 and Cys-76. Cystine bridges form between Cys-73-Cys-76 and Cys-104-Cys-113. N-linked (GlcNAc...) asparagine glycans are attached at residues Asn-133 and Asn-246. Cys-396 and Cys-408 are disulfide-bonded. An ERV/ALR sulfhydryl oxidase domain is found at 399 to 506 (SEPHFRGFPC…EDPQFPKVQW (108 aa)). 3 residues coordinate FAD: Arg-404, Trp-411, and His-415. Ser-429 is subject to Phosphoserine. The cysteines at positions 452 and 455 are disulfide-linked. Residues Asp-454, His-458, 481–488 (WSSHNRVN), Lys-503, and Trp-506 contribute to the FAD site. Cys-512 and Cys-515 are disulfide-bonded. A glycan (N-linked (GlcNAc...) asparagine) is linked at Asn-578. A disordered region spans residues 578–645 (NSTVDLGKPE…REQPRGQWHL (68 aa)). Residues 624–639 (PPEHMAELQTNEREQP) are compositionally biased toward basic and acidic residues. Residues 713-733 (ISLCVGLYSLSFMGLLAMYAY) form a helical membrane-spanning segment.

This sequence belongs to the quiescin-sulfhydryl oxidase (QSOX) family. In terms of assembly, monomer. FAD is required as a cofactor. N-glycosylated. O-glycosylated on Thr and Ser residues.

It localises to the golgi apparatus membrane. Its subcellular location is the secreted. It carries out the reaction 2 R'C(R)SH + O2 = R'C(R)S-S(R)CR' + H2O2. Its function is as follows. Catalyzes the oxidation of sulfhydryl groups in peptide and protein thiols to disulfides with the reduction of oxygen to hydrogen peroxide. Plays a role in disulfide bond formation in a variety of extracellular proteins. In fibroblasts, required for normal incorporation of laminin into the extracellular matrix, and thereby for normal cell-cell adhesion and cell migration. This Pongo abelii (Sumatran orangutan) protein is Sulfhydryl oxidase 1 (QSOX1).